We begin with the raw amino-acid sequence, 100 residues long: UPF0235 protein Cvib_0403 (100 aa).

Belongs to the UPF0235 family.

In Chlorobium phaeovibrioides (strain DSM 265 / 1930) (Prosthecochloris vibrioformis (strain DSM 265)), this protein is UPF0235 protein Cvib_0403.